The following is a 48-amino-acid chain: Small, acid-soluble spore protein G (48 aa).

Residues 1–16 are compositionally biased toward basic and acidic residues; sequence MSENRHENEENRRDAA. The segment at 1–48 is disordered; that stretch reads MSENRHENEENRRDAAVAKVQNSGNAKVVVSVNTDQDQAQAQSQDGED. Residues 35–48 show a composition bias toward low complexity; the sequence is DQDQAQAQSQDGED.

The polypeptide is Small, acid-soluble spore protein G (sspG) (Bacillus subtilis (strain 168)).